Here is a 264-residue protein sequence, read N- to C-terminus: Dehydrodolichyl diphosphate synthase complex subunit SPAC4D7.04c (264 aa).

It belongs to the UPP synthase family. Forms an active dehydrodolichyl diphosphate synthase complex with nus1. Mg(2+) is required as a cofactor.

Its subcellular location is the endoplasmic reticulum membrane. It carries out the reaction n isopentenyl diphosphate + (2E,6E)-farnesyl diphosphate = a di-trans,poly-cis-polyprenyl diphosphate + n diphosphate. It participates in protein modification; protein glycosylation. In terms of biological role, with nus1, forms the dehydrodolichyl diphosphate synthase (DDS) complex, an essential component of the dolichol monophosphate (Dol-P) biosynthetic machinery. Adds multiple copies of isopentenyl pyrophosphate (IPP) to farnesyl pyrophosphate (FPP) to produce dehydrodolichyl diphosphate (Dedol-PP), a precursor of dolichol which is utilized as a sugar carrier in protein glycosylation in the endoplasmic reticulum (ER). This is Dehydrodolichyl diphosphate synthase complex subunit SPAC4D7.04c from Schizosaccharomyces pombe (strain 972 / ATCC 24843) (Fission yeast).